We begin with the raw amino-acid sequence, 170 residues long: MDLKAHIAAVKDFPKEGILFRDITPLMLDGKAFKYASDQFTEFARSKKADLIVGPEARGFIFGCPVAVNLGVGFAPVRKPGKLPRASVTVSYDLEYGSNSLSLHEDAVKPGQRVVIIDDLLATGGTMQATVELVEKLGGIVVGLAFLIELDDLEGRKLLKNYDVKTLINY.

This sequence belongs to the purine/pyrimidine phosphoribosyltransferase family. Homodimer.

The protein resides in the cytoplasm. The catalysed reaction is AMP + diphosphate = 5-phospho-alpha-D-ribose 1-diphosphate + adenine. The protein operates within purine metabolism; AMP biosynthesis via salvage pathway; AMP from adenine: step 1/1. Catalyzes a salvage reaction resulting in the formation of AMP, that is energically less costly than de novo synthesis. The polypeptide is Adenine phosphoribosyltransferase (Acholeplasma laidlawii (strain PG-8A)).